A 390-amino-acid chain; its full sequence is Chorismate synthase (390 aa).

Residues Arg48 and Arg54 each coordinate NADP(+). FMN is bound by residues 125–127 (RSS), 238–239 (NA), Gly278, 293–297 (KPTSS), and Arg319. The disordered stretch occupies residues 359-390 (PRIPGSTTNQIHPVEMQASAPRAEDPEPDESS).

Belongs to the chorismate synthase family. In terms of assembly, homotetramer. The cofactor is FMNH2.

It catalyses the reaction 5-O-(1-carboxyvinyl)-3-phosphoshikimate = chorismate + phosphate. The protein operates within metabolic intermediate biosynthesis; chorismate biosynthesis; chorismate from D-erythrose 4-phosphate and phosphoenolpyruvate: step 7/7. Its function is as follows. Catalyzes the anti-1,4-elimination of the C-3 phosphate and the C-6 proR hydrogen from 5-enolpyruvylshikimate-3-phosphate (EPSP) to yield chorismate, which is the branch point compound that serves as the starting substrate for the three terminal pathways of aromatic amino acid biosynthesis. This reaction introduces a second double bond into the aromatic ring system. In Nitrosomonas europaea (strain ATCC 19718 / CIP 103999 / KCTC 2705 / NBRC 14298), this protein is Chorismate synthase.